A 229-amino-acid chain; its full sequence is Potassium/proton antiporter CemA (229 aa).

4 helical membrane passes run 7 to 27 (FTPL…SLSF), 114 to 134 (LICF…LLIL), 154 to 174 (ILLL…ELMI), and 189 to 209 (IISG…KYWI).

It belongs to the CemA family.

It is found in the plastid. It localises to the chloroplast inner membrane. It carries out the reaction K(+)(in) + H(+)(out) = K(+)(out) + H(+)(in). In terms of biological role, contributes to K(+)/H(+) antiport activity by supporting proton efflux to control proton extrusion and homeostasis in chloroplasts in a light-dependent manner to modulate photosynthesis. Prevents excessive induction of non-photochemical quenching (NPQ) under continuous-light conditions. Indirectly promotes efficient inorganic carbon uptake into chloroplasts. This is Potassium/proton antiporter CemA from Gossypium barbadense (Sea Island cotton).